We begin with the raw amino-acid sequence, 248 residues long: Small ribosomal subunit protein uS2 (248 aa).

Belongs to the universal ribosomal protein uS2 family.

The protein is Small ribosomal subunit protein uS2 of Leptothrix cholodnii (strain ATCC 51168 / LMG 8142 / SP-6) (Leptothrix discophora (strain SP-6)).